Consider the following 317-residue polypeptide: SVP1-like protein 2 (317 aa).

WD repeat units lie at residues 119 to 159 (AHST…KMAE) and 164 to 203 (VDHAIIFSLAISPSNNLLAVTSDKSTLHVFNLPHPRNAPY).

It belongs to the WD repeat PROPPIN family.

Its subcellular location is the vacuole membrane. It localises to the cytoplasmic vesicle membrane. Its function is as follows. Involved in mitochondrial or peroxisomal functions and amino acid signaling pathways. This chain is SVP1-like protein 2 (hsv2), found in Emericella nidulans (strain FGSC A4 / ATCC 38163 / CBS 112.46 / NRRL 194 / M139) (Aspergillus nidulans).